The following is a 311-amino-acid chain: Ribosomal RNA small subunit methyltransferase H (311 aa).

S-adenosyl-L-methionine contacts are provided by residues 34–36 (GGY), Asp51, Phe75, Asp93, and Gln100.

The protein belongs to the methyltransferase superfamily. RsmH family.

It is found in the cytoplasm. The catalysed reaction is cytidine(1402) in 16S rRNA + S-adenosyl-L-methionine = N(4)-methylcytidine(1402) in 16S rRNA + S-adenosyl-L-homocysteine + H(+). Functionally, specifically methylates the N4 position of cytidine in position 1402 (C1402) of 16S rRNA. The chain is Ribosomal RNA small subunit methyltransferase H from Caulobacter vibrioides (strain ATCC 19089 / CIP 103742 / CB 15) (Caulobacter crescentus).